A 956-amino-acid chain; its full sequence is RNA-silencing factor ers1 (956 aa).

Its subcellular location is the cytoplasm. The protein resides in the cytoskeleton. It localises to the microtubule organizing center. It is found in the spindle pole body. In terms of biological role, involved in RNAi-dependent heterochromatin formation and centromeric silencing. Required for the conversion of centromeric pre-small interfering RNA transcripts into small interfering RNAs, histone H3 'Lys9' methylation, and the recruitment of the RITS complex to centromeric sequences. The chain is RNA-silencing factor ers1 (ers1) from Schizosaccharomyces pombe (strain 972 / ATCC 24843) (Fission yeast).